The sequence spans 501 residues: Bifunctional purine biosynthesis protein PurH (501 aa).

In terms of domain architecture, MGS-like spans Met1 to Ser144.

The protein belongs to the PurH family.

It catalyses the reaction (6R)-10-formyltetrahydrofolate + 5-amino-1-(5-phospho-beta-D-ribosyl)imidazole-4-carboxamide = 5-formamido-1-(5-phospho-D-ribosyl)imidazole-4-carboxamide + (6S)-5,6,7,8-tetrahydrofolate. The catalysed reaction is IMP + H2O = 5-formamido-1-(5-phospho-D-ribosyl)imidazole-4-carboxamide. It participates in purine metabolism; IMP biosynthesis via de novo pathway; 5-formamido-1-(5-phospho-D-ribosyl)imidazole-4-carboxamide from 5-amino-1-(5-phospho-D-ribosyl)imidazole-4-carboxamide (10-formyl THF route): step 1/1. It functions in the pathway purine metabolism; IMP biosynthesis via de novo pathway; IMP from 5-formamido-1-(5-phospho-D-ribosyl)imidazole-4-carboxamide: step 1/1. This is Bifunctional purine biosynthesis protein PurH from Clostridium perfringens (strain ATCC 13124 / DSM 756 / JCM 1290 / NCIMB 6125 / NCTC 8237 / Type A).